Consider the following 20-residue polypeptide: Dahlein-5.3 (20 aa).

As to expression, expressed by the skin dorsal glands.

The protein resides in the secreted. Its function is as follows. Has no antimicrobial activity. Strongly inhibits the formation of NO by neuronal nitric oxide synthase at micromolar concentrations. This is Dahlein-5.3 from Ranoidea dahlii (Dahl's aquatic frog).